The chain runs to 146 residues: Hut operon positive regulatory protein (146 aa).

Belongs to the HutP family. As to quaternary structure, homohexamer.

Antiterminator that binds to cis-acting regulatory sequences on the mRNA in the presence of histidine, thereby suppressing transcription termination and activating the hut operon for histidine utilization. The sequence is that of Hut operon positive regulatory protein from Bacillus mycoides (strain KBAB4) (Bacillus weihenstephanensis).